Reading from the N-terminus, the 562-residue chain is Aureusidin synthase (562 aa).

Cystine bridges form between Cys71/Cys86 and Cys85/Cys148. Cu cation is bound by residues His147, His168, His177, His301, His305, and His335. A cross-link (2'-(S-cysteinyl)-histidine (Cys-His)) is located at residues 151–168 (CAGAYNQAGFTNLKLQIH).

Belongs to the tyrosinase family. In terms of assembly, monomer. It depends on Cu(2+) as a cofactor. In terms of processing, glycosylated. Contains probably N- and C-terminal propeptides. As to expression, expressed in petals. Not detected in stems and leaves.

Its subcellular location is the vacuole lumen. It carries out the reaction 2',4,4',6'-tetrahydroxychalcone 4'-O-beta-D-glucoside + O2 = aureusidin 6-O-beta-glucoside + H2O. It catalyses the reaction 2 2',3,4,4',6'-pentahydroxychalcone 4'-O-beta-D-glucoside + O2 + 2 H(+) = 2 aureusidin 6-O-beta-glucoside + 2 H2O. The enzyme catalyses 2',3,4,4',6'-pentahydroxychalcone 4'-O-beta-D-glucoside + O2 + H(+) = bracteatin 6-O-beta-glucoside + H2O. Its activity is regulated as follows. H(2)O(2) activates the 3-hydroxylation and oxidative cyclization of tetrahydroxychalcone but inhibits reaction with pentahydroxychalcone. Inhibited by phenylthiourea. Functionally, involved in the biosynthesis of aurones, plant flavonoids that provide yellow coloration to flowers. Can use tetrahydroxychalcone (THC), pentahydroxychalcone (PHC), THC 4'-glucoside and PHC 4'-glucoside as substrates, but not 2'-hydroxychalcone, 4-hydroxychalcone, PHC 3-glucoside, 2',6'-dihydroxy-4,4'-dimethoxychalcone, naringenin, eriodictyol and 4,4',6-trihydroxyaurone. Can also produce bracteatin from PHC. The polypeptide is Aureusidin synthase (AS1) (Antirrhinum majus (Garden snapdragon)).